We begin with the raw amino-acid sequence, 45 residues long: Mu-conotoxin-like Cal 12.1.2c (45 aa).

4 cysteine pairs are disulfide-bonded: Cys-3–Cys-16, Cys-11–Cys-28, Cys-18–Cys-33, and Cys-27–Cys-39. The residue at position 23 (Pro-23) is a 4-hydroxyproline. Trp-37 and Trp-38 each carry 6'-bromotryptophan. Pro-40 is modified (4-hydroxyproline). 6'-bromotryptophan is present on Trp-44.

Expressed by the venom duct.

The protein localises to the secreted. In terms of biological role, mu-conotoxins block voltage-gated sodium channels. This toxin reversibly blocks voltage-gated sodium channel in cephalopods, with no alteration in the voltage dependence of sodium conductance or on the kinetics of inactivation. This is Mu-conotoxin-like Cal 12.1.2c from Californiconus californicus (California cone).